The following is a 483-amino-acid chain: Probable glycosyltransferase 4 (483 aa).

The Cytoplasmic portion of the chain corresponds to 1-26; that stretch reads MSKLQDRHGGEAAADVGRRARHQRLL. The chain crosses the membrane as a helical; Signal-anchor for type II membrane protein span at residues 27–47; the sequence is LSFPVFPIVLLLLAPCTIFFF. Topologically, residues 48 to 483 are lumenal; that stretch reads TSGDVPLPRI…KKTSRAARPM (436 aa). Residues 71–119 are disordered; it reads AVAADTSPPPPSPPSSSPPPLSFPPPPPPPSSPPPPALPVVDDHSDTQR. Residues 77-108 show a composition bias toward pro residues; it reads SPPPPSPPSSSPPPLSFPPPPPPPSSPPPPAL. The N-linked (GlcNAc...) asparagine glycan is linked to N448.

The protein belongs to the glycosyltransferase 34 family.

The protein localises to the golgi apparatus membrane. Its function is as follows. Probable glycosyltransferase that may be involved in the biosynthesis of xyloglucan. This Oryza sativa subsp. indica (Rice) protein is Probable glycosyltransferase 4.